The primary structure comprises 176 residues: 3-hydroxyanthranilate 3,4-dioxygenase (176 aa).

Arg44 is an O2 binding site. Residues His48, Glu54, and His92 each contribute to the Fe cation site. Residue Glu54 coordinates substrate. Arg96 and Glu106 together coordinate substrate. Fe cation-binding residues include Cys121, Cys124, Cys158, and Cys161.

It belongs to the 3-HAO family. In terms of assembly, homodimer. Requires Fe(2+) as cofactor.

It catalyses the reaction 3-hydroxyanthranilate + O2 = (2Z,4Z)-2-amino-3-carboxymuconate 6-semialdehyde. Its pathway is cofactor biosynthesis; NAD(+) biosynthesis; quinolinate from L-kynurenine: step 3/3. Its function is as follows. Catalyzes the oxidative ring opening of 3-hydroxyanthranilate to 2-amino-3-carboxymuconate semialdehyde, which spontaneously cyclizes to quinolinate. The chain is 3-hydroxyanthranilate 3,4-dioxygenase from Xanthomonas euvesicatoria pv. vesicatoria (strain 85-10) (Xanthomonas campestris pv. vesicatoria).